The sequence spans 274 residues: 2,3,4,5-tetrahydropyridine-2,6-dicarboxylate N-succinyltransferase (274 aa).

Residues R106 and D143 each coordinate substrate.

The protein belongs to the transferase hexapeptide repeat family. In terms of assembly, homotrimer.

The protein resides in the cytoplasm. The catalysed reaction is (S)-2,3,4,5-tetrahydrodipicolinate + succinyl-CoA + H2O = (S)-2-succinylamino-6-oxoheptanedioate + CoA. It functions in the pathway amino-acid biosynthesis; L-lysine biosynthesis via DAP pathway; LL-2,6-diaminopimelate from (S)-tetrahydrodipicolinate (succinylase route): step 1/3. In Rickettsia akari (strain Hartford), this protein is 2,3,4,5-tetrahydropyridine-2,6-dicarboxylate N-succinyltransferase.